Here is a 539-residue protein sequence, read N- to C-terminus: uncharacterized protein (539 aa).

Disordered stretches follow at residues 179–203 (SDELLPDTGEDSDEDGHNHGGHSHG) and 433–459 (AQASARAQARAARRGRSAAKARGHRDE). The span at 182-192 (LLPDTGEDSDE) shows a compositional bias: acidic residues. The segment covering 433 to 442 (AQASARAQAR) has biased composition (low complexity). The segment covering 443-455 (AARRGRSAAKARG) has biased composition (basic residues).

The protein belongs to the mycobacterial PPE family.

The protein resides in the secreted. This is an uncharacterized protein from Mycobacterium tuberculosis (strain CDC 1551 / Oshkosh).